An 815-amino-acid chain; its full sequence is (E)-gamma-bisabolene synthase (815 aa).

Mg(2+)-binding residues include D561, D565, D709, and E717. The DDXXD motif motif lies at 561-565; that stretch reads DDMYD.

The protein belongs to the terpene synthase family. Tpsd subfamily. Mg(2+) serves as cofactor. Requires Mn(2+) as cofactor.

It localises to the cytoplasm. It carries out the reaction (2E,6E)-farnesyl diphosphate = (E)-gamma-bisabolene + diphosphate. The protein operates within terpene metabolism; oleoresin biosynthesis. Functionally, involved in defensive oleoresin formation in conifers in response to insect attack or other injury. Involved in sesquiterpene (C15) olefins biosynthesis. Produces mainly (E)-gamma-bisabolene when used with farnesyl diphosphate as substrate. No activity with geranyl diphosphate or geranylgeranyl diphosphate. The polypeptide is (E)-gamma-bisabolene synthase (TPS3) (Pseudotsuga menziesii (Douglas-fir)).